Reading from the N-terminus, the 187-residue chain is Homeobox expressed in ES cells 1-B (187 aa).

A DNA-binding region (homeobox) is located at residues 110-169; that stretch reads GRRPRTAFTRSQIEILENVFRVNSYPGIDVREELASKLALDEDRIQIWFQNRRAKLKRSH.

This sequence belongs to the ANF homeobox family. As to quaternary structure, the N-terminus interacts with the LIM 2 domain of zyx. In terms of tissue distribution, first expressed at a low level in the late blastula stage (stage 9) in most cells of the animal half of the embryo. Following this, predominantly expressed in two zones; the dorsal blastopore lip (Spemann organizer) at the beginning of gastrulation, and subsequently in the anterior part of the neural anlage (the region of future forebrain).

The protein resides in the nucleus. Functionally, regulates the earliest stages of development of the anterior neural plate. Plays a role in forebrain development by inhibiting the expression of otx2 and pax6 in the rostral region of the anterior neural plate. Necessary for both neural differentiation and neural patterning. Controls Spemann organizer development. May act as a transcriptional repressor. This is Homeobox expressed in ES cells 1-B (hesx1-b) from Xenopus laevis (African clawed frog).